The primary structure comprises 178 residues: CASP-like protein 2A2 (178 aa).

Over 1 to 22 (MDKTDQTAIDESALVLNRTEKS) the chain is Cytoplasmic. A helical membrane pass occupies residues 23 to 43 (AEAVLRVASMALSITGLVIMI). Over 44–69 (KNSISNEFGSVSYSNIGAFMYLVSAN) the chain is Extracellular. The helical transmembrane segment at 70–90 (GVCAAYSLLSALAILALPCPI) threads the bilayer. The Cytoplasmic portion of the chain corresponds to 91–96 (SKVQVR). A helical membrane pass occupies residues 97–117 (TLFLLDQVVTYVVLAAGAVSA). Residues 118–145 (ETVYLAYYGNIPITWSSACDSYGSFCHN) lie on the Extracellular side of the membrane. The helical transmembrane segment at 146–166 (ALISVVFTFVVSLLYMLLSLI) threads the bilayer. Residues 167–178 (SSYRLFTRFEAP) lie on the Cytoplasmic side of the membrane.

Belongs to the Casparian strip membrane proteins (CASP) family. Homodimer and heterodimers. In terms of tissue distribution, mostly expressed in flowers and buds and, to a lower extent, in roots and yellow siliques. Localized in the floral organ abscission zone.

Its subcellular location is the cell membrane. Its function is as follows. Involved in floral organ shedding. The polypeptide is CASP-like protein 2A2 (Arabidopsis thaliana (Mouse-ear cress)).